The following is a 191-amino-acid chain: Thymidine kinase (191 aa).

ATP contacts are provided by residues 9–16 (GTMNSGKT) and 85–88 (DEAQ). The active-site Proton acceptor is Glu86. Zn(2+) is bound by residues Cys143, Cys146, Cys180, and His183.

Belongs to the thymidine kinase family. As to quaternary structure, homotetramer.

The protein localises to the cytoplasm. It catalyses the reaction thymidine + ATP = dTMP + ADP + H(+). In Streptococcus gordonii (strain Challis / ATCC 35105 / BCRC 15272 / CH1 / DL1 / V288), this protein is Thymidine kinase.